Here is a 576-residue protein sequence, read N- to C-terminus: Minor capsid protein P2 (576 aa).

The tract at residues 13–35 is hydrophobic; sequence LFLYTNSIEMELLAVASIIGYGL. The segment at 322–348 is disordered; the sequence is TRGRPRTGDGDTEPIINPNGERDGTGS.

As to quaternary structure, interacts with the major capsid protein.

Its subcellular location is the virion. Functionally, one of the minor capsid proteins that constitute a network internal to the major capsid proteins and outside the lipid membrane. The minor capsid proteins glue and stabilize the capsomers. Also acts as a molecular tape measure protein that determines the size of the viral capsid. The sequence is that of Minor capsid protein P2 from Chlorella (PBCV-1).